Here is a 98-residue protein sequence, read N- to C-terminus: MPVVYVNIFLAFIVSLTGLLIYRSHLMSSLLCLEGMMLSLFVMLTVTVLNNHFTLANMAPIILLVFAACEAALGLSLLVMVSNTYGTDYVQNLNLLQC.

Transmembrane regions (helical) follow at residues 1–21, 29–49, and 61–81; these read MPVV…GLLI, SLLC…VTVL, and IILL…LVMV.

It belongs to the complex I subunit 4L family. As to quaternary structure, core subunit of respiratory chain NADH dehydrogenase (Complex I) which is composed of 45 different subunits.

It localises to the mitochondrion inner membrane. The catalysed reaction is a ubiquinone + NADH + 5 H(+)(in) = a ubiquinol + NAD(+) + 4 H(+)(out). Core subunit of the mitochondrial membrane respiratory chain NADH dehydrogenase (Complex I) which catalyzes electron transfer from NADH through the respiratory chain, using ubiquinone as an electron acceptor. Part of the enzyme membrane arm which is embedded in the lipid bilayer and involved in proton translocation. This Helarctos malayanus (Malayan sun bear) protein is NADH-ubiquinone oxidoreductase chain 4L (MT-ND4L).